The following is a 418-amino-acid chain: Actin-related protein 3 (418 aa).

At A2 the chain carries N-acetylalanine. 4 positions are modified to N6-acetyllysine: K240, K244, K251, and K254.

This sequence belongs to the actin family. ARP3 subfamily. In terms of assembly, component of the Arp2/3 complex composed of ACTR2/ARP2, ACTR3/ARP3, ARPC1B/p41-ARC, ARPC2/p34-ARC, ARPC3/p21-ARC, ARPC4/p20-ARC and ARPC5/p16-ARC. Interacts with WHDC1. Interacts weakly with MEFV. Interacts with AVIL.

Its subcellular location is the cytoplasm. It is found in the cytoskeleton. The protein resides in the cell projection. The protein localises to the nucleus. Its function is as follows. ATP-binding component of the Arp2/3 complex, a multiprotein complex that mediates actin polymerization upon stimulation by nucleation-promoting factor (NPF). The Arp2/3 complex mediates the formation of branched actin networks in the cytoplasm, providing the force for cell motility. Seems to contact the pointed end of the daughter actin filament. In podocytes, required for the formation of lamellipodia downstream of AVIL and PLCE1 regulation. In addition to its role in the cytoplasmic cytoskeleton, the Arp2/3 complex also promotes actin polymerization in the nucleus, thereby regulating gene transcription and repair of damaged DNA. The Arp2/3 complex promotes homologous recombination (HR) repair in response to DNA damage by promoting nuclear actin polymerization, leading to drive motility of double-strand breaks (DSBs). Plays a role in ciliogenesis. This is Actin-related protein 3 (ACTR3) from Bos taurus (Bovine).